A 253-amino-acid polypeptide reads, in one-letter code: Trypsin delta (253 aa).

Positions 1–22 (MLKFVILLSAVACALGGTIPEG) are cleaved as a signal peptide. Residues 23–30 (LLPQLDGR) constitute a propeptide, activation peptide. Residues 31 to 253 (IVGGTATTIS…DLRAWVVRNA (223 aa)) enclose the Peptidase S1 domain. Cys56 and Cys72 are disulfide-bonded. Catalysis depends on charge relay system residues His71 and Asp116. 2 disulfide bridges follow: Cys180-Cys197 and Cys206-Cys230. The active-site Charge relay system is the Ser210.

It belongs to the peptidase S1 family.

The protein localises to the secreted. The protein resides in the extracellular space. The enzyme catalyses Preferential cleavage: Arg-|-Xaa, Lys-|-Xaa.. The chain is Trypsin delta from Drosophila erecta (Fruit fly).